The following is a 381-amino-acid chain: Chaperone protein DnaJ (381 aa).

The J domain occupies 5–70 (DYYEVLGLQK…QKRAAYDQYG (66 aa)). A CR-type zinc finger spans residues 133-211 (GTTKDIQINT…CHGEGRVHKK (79 aa)). Positions 146, 149, 163, 166, 185, 188, 199, and 202 each coordinate Zn(2+). 4 CXXCXGXG motif repeats span residues 146–153 (CDSCGGSG), 163–170 (CPHCHGSG), 185–192 (CPTCHGSG), and 199–206 (CRSCHGEG).

This sequence belongs to the DnaJ family. Homodimer. The cofactor is Zn(2+).

It is found in the cytoplasm. Functionally, participates actively in the response to hyperosmotic and heat shock by preventing the aggregation of stress-denatured proteins and by disaggregating proteins, also in an autonomous, DnaK-independent fashion. Unfolded proteins bind initially to DnaJ; upon interaction with the DnaJ-bound protein, DnaK hydrolyzes its bound ATP, resulting in the formation of a stable complex. GrpE releases ADP from DnaK; ATP binding to DnaK triggers the release of the substrate protein, thus completing the reaction cycle. Several rounds of ATP-dependent interactions between DnaJ, DnaK and GrpE are required for fully efficient folding. Also involved, together with DnaK and GrpE, in the DNA replication of plasmids through activation of initiation proteins. The sequence is that of Chaperone protein DnaJ from Haemophilus influenzae (strain 86-028NP).